A 34-amino-acid polypeptide reads, in one-letter code: Photosystem II reaction center protein M (34 aa).

Residues 5–25 form a helical membrane-spanning segment; that stretch reads ILAFIATALFILVPTAFLLII.

Belongs to the PsbM family. PSII is composed of 1 copy each of membrane proteins PsbA, PsbB, PsbC, PsbD, PsbE, PsbF, PsbH, PsbI, PsbJ, PsbK, PsbL, PsbM, PsbT, PsbX, PsbY, PsbZ, Psb30/Ycf12, at least 3 peripheral proteins of the oxygen-evolving complex and a large number of cofactors. It forms dimeric complexes.

The protein resides in the plastid. The protein localises to the chloroplast thylakoid membrane. In terms of biological role, one of the components of the core complex of photosystem II (PSII). PSII is a light-driven water:plastoquinone oxidoreductase that uses light energy to abstract electrons from H(2)O, generating O(2) and a proton gradient subsequently used for ATP formation. It consists of a core antenna complex that captures photons, and an electron transfer chain that converts photonic excitation into a charge separation. This subunit is found at the monomer-monomer interface. This chain is Photosystem II reaction center protein M, found in Ceratophyllum demersum (Rigid hornwort).